Reading from the N-terminus, the 452-residue chain is Pup--protein ligase (452 aa).

Mg(2+) is bound at residue Glu-9. Residue Arg-53 participates in ATP binding. Tyr-55 contacts Mg(2+). Asp-57 acts as the Proton acceptor in catalysis. Position 63 (Glu-63) interacts with Mg(2+). Positions 66 and 419 each coordinate ATP.

It belongs to the Pup ligase/Pup deamidase family. Pup-conjugating enzyme subfamily.

It carries out the reaction ATP + [prokaryotic ubiquitin-like protein]-L-glutamate + [protein]-L-lysine = ADP + phosphate + N(6)-([prokaryotic ubiquitin-like protein]-gamma-L-glutamyl)-[protein]-L-lysine.. The protein operates within protein degradation; proteasomal Pup-dependent pathway. Its pathway is protein modification; protein pupylation. Its function is as follows. Catalyzes the covalent attachment of the prokaryotic ubiquitin-like protein modifier Pup to the proteasomal substrate proteins, thereby targeting them for proteasomal degradation. This tagging system is termed pupylation. The ligation reaction involves the side-chain carboxylate of the C-terminal glutamate of Pup and the side-chain amino group of a substrate lysine. The protein is Pup--protein ligase of Rhodococcus jostii (strain RHA1).